The following is a 290-amino-acid chain: 4-diphosphocytidyl-2-C-methyl-D-erythritol kinase (290 aa).

Lys13 is a catalytic residue. 96-106 (PMGGGIGGGSS) serves as a coordination point for ATP. Asp138 is an active-site residue.

This sequence belongs to the GHMP kinase family. IspE subfamily.

It carries out the reaction 4-CDP-2-C-methyl-D-erythritol + ATP = 4-CDP-2-C-methyl-D-erythritol 2-phosphate + ADP + H(+). It functions in the pathway isoprenoid biosynthesis; isopentenyl diphosphate biosynthesis via DXP pathway; isopentenyl diphosphate from 1-deoxy-D-xylulose 5-phosphate: step 3/6. In terms of biological role, catalyzes the phosphorylation of the position 2 hydroxy group of 4-diphosphocytidyl-2C-methyl-D-erythritol. This is 4-diphosphocytidyl-2-C-methyl-D-erythritol kinase from Vibrio cholerae serotype O1 (strain ATCC 39541 / Classical Ogawa 395 / O395).